Reading from the N-terminus, the 431-residue chain is Serine--tRNA ligase (431 aa).

L-serine is bound at residue 238 to 240 (TAE). 269 to 271 (RSE) lines the ATP pocket. Glutamate 292 lines the L-serine pocket. Position 356 to 359 (356 to 359 (EISS)) interacts with ATP. Serine 392 lines the L-serine pocket.

This sequence belongs to the class-II aminoacyl-tRNA synthetase family. Type-1 seryl-tRNA synthetase subfamily. Homodimer. The tRNA molecule binds across the dimer.

It localises to the cytoplasm. It carries out the reaction tRNA(Ser) + L-serine + ATP = L-seryl-tRNA(Ser) + AMP + diphosphate + H(+). It catalyses the reaction tRNA(Sec) + L-serine + ATP = L-seryl-tRNA(Sec) + AMP + diphosphate + H(+). The protein operates within aminoacyl-tRNA biosynthesis; selenocysteinyl-tRNA(Sec) biosynthesis; L-seryl-tRNA(Sec) from L-serine and tRNA(Sec): step 1/1. Its function is as follows. Catalyzes the attachment of serine to tRNA(Ser). Is also able to aminoacylate tRNA(Sec) with serine, to form the misacylated tRNA L-seryl-tRNA(Sec), which will be further converted into selenocysteinyl-tRNA(Sec). In Pectobacterium atrosepticum (strain SCRI 1043 / ATCC BAA-672) (Erwinia carotovora subsp. atroseptica), this protein is Serine--tRNA ligase.